The primary structure comprises 235 residues: tRNA pseudouridine synthase B (235 aa).

Asp45 serves as the catalytic Nucleophile.

It belongs to the pseudouridine synthase TruB family. Type 1 subfamily.

The catalysed reaction is uridine(55) in tRNA = pseudouridine(55) in tRNA. Responsible for synthesis of pseudouridine from uracil-55 in the psi GC loop of transfer RNAs. This is tRNA pseudouridine synthase B from Chlamydia abortus (strain DSM 27085 / S26/3) (Chlamydophila abortus).